A 475-amino-acid chain; its full sequence is tRNA-2-methylthio-N(6)-dimethylallyladenosine synthase (475 aa).

In terms of domain architecture, MTTase N-terminal spans 3–120 (KKLHIKTWGC…LPEMIDQIKD (118 aa)). Residues cysteine 12, cysteine 49, cysteine 83, cysteine 157, cysteine 161, and cysteine 164 each contribute to the [4Fe-4S] cluster site. One can recognise a Radical SAM core domain in the interval 143–375 (RAEGPSAFVS…QDRITQQAMR (233 aa)). Positions 378–441 (RQMVGTVQRI…TNSLRGVFIR (64 aa)) constitute a TRAM domain.

It belongs to the methylthiotransferase family. MiaB subfamily. Monomer. It depends on [4Fe-4S] cluster as a cofactor.

Its subcellular location is the cytoplasm. It catalyses the reaction N(6)-dimethylallyladenosine(37) in tRNA + (sulfur carrier)-SH + AH2 + 2 S-adenosyl-L-methionine = 2-methylsulfanyl-N(6)-dimethylallyladenosine(37) in tRNA + (sulfur carrier)-H + 5'-deoxyadenosine + L-methionine + A + S-adenosyl-L-homocysteine + 2 H(+). Functionally, catalyzes the methylthiolation of N6-(dimethylallyl)adenosine (i(6)A), leading to the formation of 2-methylthio-N6-(dimethylallyl)adenosine (ms(2)i(6)A) at position 37 in tRNAs that read codons beginning with uridine. The protein is tRNA-2-methylthio-N(6)-dimethylallyladenosine synthase of Shewanella pealeana (strain ATCC 700345 / ANG-SQ1).